We begin with the raw amino-acid sequence, 149 residues long: Transcriptional repressor NrdR (149 aa).

A zinc finger spans residues 3–34 (CPFCSATDTKVIDSRLVSDGHQVRRRRQCLAC). The ATP-cone domain maps to 49 to 139 (PKVIKSNGNR…VYRSFEDIKE (91 aa)).

This sequence belongs to the NrdR family. Requires Zn(2+) as cofactor.

Negatively regulates transcription of bacterial ribonucleotide reductase nrd genes and operons by binding to NrdR-boxes. This is Transcriptional repressor NrdR from Aliivibrio salmonicida (strain LFI1238) (Vibrio salmonicida (strain LFI1238)).